The sequence spans 443 residues: ATP-dependent protease ATPase subunit HslU (443 aa).

Residues Ile20, 62-67, Asp255, Glu321, and Arg393 contribute to the ATP site; that span reads GVGKTE.

This sequence belongs to the ClpX chaperone family. HslU subfamily. As to quaternary structure, a double ring-shaped homohexamer of HslV is capped on each side by a ring-shaped HslU homohexamer. The assembly of the HslU/HslV complex is dependent on binding of ATP.

It localises to the cytoplasm. Its function is as follows. ATPase subunit of a proteasome-like degradation complex; this subunit has chaperone activity. The binding of ATP and its subsequent hydrolysis by HslU are essential for unfolding of protein substrates subsequently hydrolyzed by HslV. HslU recognizes the N-terminal part of its protein substrates and unfolds these before they are guided to HslV for hydrolysis. This chain is ATP-dependent protease ATPase subunit HslU, found in Helicobacter pylori (strain Shi470).